Here is a 158-residue protein sequence, read N- to C-terminus: Transcriptional repressor NrdR (158 aa).

The segment at 3–34 is a zinc-finger region; the sequence is CPSCQNTDSRVLESRAADGGRSVRRRRECLNC. The ATP-cone domain occupies 49–139; sequence ITVIKRDGCR…VYRQFRGIDD (91 aa).

The protein belongs to the NrdR family. Zn(2+) is required as a cofactor.

Its function is as follows. Negatively regulates transcription of bacterial ribonucleotide reductase nrd genes and operons by binding to NrdR-boxes. This is Transcriptional repressor NrdR from Synechococcus sp. (strain CC9902).